Consider the following 643-residue polypeptide: Threonine--tRNA ligase (643 aa).

The TGS domain maps to 1-65 (MIHITLPDGS…NKDMPLSIVT (65 aa)). Positions 246–537 (DHRKLGRELD…LIEQHAGAMP (292 aa)) are catalytic. Residues Cys337, His388, and His514 each contribute to the Zn(2+) site.

This sequence belongs to the class-II aminoacyl-tRNA synthetase family. Homodimer. The cofactor is Zn(2+).

The protein localises to the cytoplasm. It carries out the reaction tRNA(Thr) + L-threonine + ATP = L-threonyl-tRNA(Thr) + AMP + diphosphate + H(+). In terms of biological role, catalyzes the attachment of threonine to tRNA(Thr) in a two-step reaction: L-threonine is first activated by ATP to form Thr-AMP and then transferred to the acceptor end of tRNA(Thr). Also edits incorrectly charged L-seryl-tRNA(Thr). The sequence is that of Threonine--tRNA ligase from Delftia acidovorans (strain DSM 14801 / SPH-1).